The sequence spans 464 residues: Glutamate--tRNA ligase (464 aa).

The 'HIGH' region signature appears at 9–19 (PSPTGYLHIGG). A 'KMSKS' region motif is present at residues 242 to 246 (KISKR). Lys245 serves as a coordination point for ATP.

The protein belongs to the class-I aminoacyl-tRNA synthetase family. Glutamate--tRNA ligase type 1 subfamily. As to quaternary structure, monomer.

It localises to the cytoplasm. It catalyses the reaction tRNA(Glu) + L-glutamate + ATP = L-glutamyl-tRNA(Glu) + AMP + diphosphate. Functionally, catalyzes the attachment of glutamate to tRNA(Glu) in a two-step reaction: glutamate is first activated by ATP to form Glu-AMP and then transferred to the acceptor end of tRNA(Glu). The polypeptide is Glutamate--tRNA ligase (Neisseria meningitidis serogroup B (strain ATCC BAA-335 / MC58)).